Consider the following 2799-residue polypeptide: Peramine synthetase ppzA (2799 aa).

The interval 270-666 (QERCRLQPNA…VGRKDTQVKI (397 aa)) is adenylation 1. A Carrier 1 domain is found at 799-875 (QPLTGMERLL…DLSRQSRYIE (77 aa)). The residue at position 836 (Ser836) is an O-(pantetheine 4'-phosphoryl)serine. The condensation stretch occupies residues 914–1327 (DAYPCTPLQE…ITILTTEDLE (414 aa)). Positions 1350 to 1743 (DKVQARPNAP…TLSFVRRKDT (394 aa)) are adenylation 2. Residues 1874-1970 (LEIGCGSGMM…EYLVKLIQDI (97 aa)) form a methylation (Met) domain region. Residues 2290 to 2368 (SPTTDMEKEL…RLLLDCCCDD (79 aa)) form the Carrier 2 domain. Ser2327 is subject to O-(pantetheine 4'-phosphoryl)serine. The tract at residues 2420 to 2737 (TVLLTGANGF…LADMLQDLED (318 aa)) is thiesterase (TE) domain.

This sequence belongs to the NRP synthetase family. Requires pantetheine 4'-phosphate as cofactor.

The catalysed reaction is (S)-1-pyrroline-5-carboxylate + L-arginine + S-adenosyl-L-methionine + 2 ATP = peramine + 2 AMP + S-adenosyl-L-homocysteine + 2 diphosphate + H2O + 2 H(+). It participates in secondary metabolite biosynthesis. Its function is as follows. Nonribosomal peptide synthetase; part of the gene cluster that mediates the biosynthesis of pyrrolopyrazines, secondary metabolites showing insecticidal activity. The single multifunctional NRPS ppzA is responsible for the biosynthesis of peramine. The condensation domain of ppzA is proposed to catalyze formation of a peptide bond between 1-pyrroline-5-carboxylate and arginine. The methylation domain of ppzA would catalyze the N-methylation of the alpha-amino group of arginine. The reductase domain is proposed to be responsible for reduction of the thioester and the cyclization to form an iminium ion resulting in release from the peptide synthetase. Deprotonation of this intermediate and oxidation of the pyrroline ring would give rise to peramine. This final oxidation to give the pyrrole functionality may be spontaneous. In Epichloe species that produce only peramine, the peramine synthetase gene is not localized in a gene cluster, in contrast to Metarhizium species that contain additional pyrrolopyrazine biosynthesis genes. The 2-oxoglutarate-Fe(II) type oxidoreductase ppzC hydroxylates peramine to yield the newly identified compound 8-hydroxyperamine whereas ppzD converts L-proline into trans-4-hydroxy-L-proline, a precursor of peramine biosynthesis. The chain is Peramine synthetase ppzA from Metarhizium majus (strain ARSEF 297).